We begin with the raw amino-acid sequence, 210 residues long: Thymidylate kinase (210 aa).

Residue 10 to 17 (GLEGAGKS) coordinates ATP.

The protein belongs to the thymidylate kinase family.

It carries out the reaction dTMP + ATP = dTDP + ADP. Its function is as follows. Phosphorylation of dTMP to form dTDP in both de novo and salvage pathways of dTTP synthesis. The sequence is that of Thymidylate kinase (tmk) from Haemophilus influenzae (strain ATCC 51907 / DSM 11121 / KW20 / Rd).